The following is a 776-amino-acid chain: V-set and immunoglobulin domain-containing protein 10-like 2 (776 aa).

An N-terminal signal peptide occupies residues 1-28 (MVGLSAHHRPLGCRLLILFCLLHPGASG). Ig-like domains are found at residues 32 to 140 (PTSN…LYLM), 150 to 234 (PRVQ…AFLD), 242 to 324 (PVIT…TTVQ), 399 to 498 (PTLA…LRLE), and 500 to 592 (PQLT…VLLE). 5 disulfide bridges follow: C56–C122, C169–C217, C268–C308, C435–C480, and C521–C576. The 101-residue stretch at 608 to 708 (TPPNVTISRL…EVKTPVDPAF (101 aa)) folds into the Fibronectin type-III domain. 2 N-linked (GlcNAc...) asparagine glycosylation sites follow: N611 and N637. Residues 713 to 733 (AVLGAAGTGVVVALATSLLVF) traverse the membrane as a helical segment.

It localises to the membrane. The chain is V-set and immunoglobulin domain-containing protein 10-like 2 from Mus musculus (Mouse).